We begin with the raw amino-acid sequence, 660 residues long: DNA mismatch repair protein MutL (660 aa).

The protein belongs to the DNA mismatch repair MutL/HexB family.

This protein is involved in the repair of mismatches in DNA. It is required for dam-dependent methyl-directed DNA mismatch repair. May act as a 'molecular matchmaker', a protein that promotes the formation of a stable complex between two or more DNA-binding proteins in an ATP-dependent manner without itself being part of a final effector complex. This is DNA mismatch repair protein MutL from Streptococcus equi subsp. zooepidemicus (strain H70).